A 337-amino-acid chain; its full sequence is tRNA N6-adenosine threonylcarbamoyltransferase (337 aa).

Fe cation-binding residues include histidine 111 and histidine 115. Substrate-binding positions include 134 to 138 (LVSGG), aspartate 167, glycine 180, and asparagine 272. Aspartate 300 is a binding site for Fe cation.

Belongs to the KAE1 / TsaD family. Fe(2+) serves as cofactor.

It localises to the cytoplasm. It catalyses the reaction L-threonylcarbamoyladenylate + adenosine(37) in tRNA = N(6)-L-threonylcarbamoyladenosine(37) in tRNA + AMP + H(+). Required for the formation of a threonylcarbamoyl group on adenosine at position 37 (t(6)A37) in tRNAs that read codons beginning with adenine. Is involved in the transfer of the threonylcarbamoyl moiety of threonylcarbamoyl-AMP (TC-AMP) to the N6 group of A37, together with TsaE and TsaB. TsaD likely plays a direct catalytic role in this reaction. The protein is tRNA N6-adenosine threonylcarbamoyltransferase of Escherichia coli O157:H7.